Reading from the N-terminus, the 413-residue chain is Gamma-glutamyl phosphate reductase (413 aa).

This sequence belongs to the gamma-glutamyl phosphate reductase family.

The protein resides in the cytoplasm. It carries out the reaction L-glutamate 5-semialdehyde + phosphate + NADP(+) = L-glutamyl 5-phosphate + NADPH + H(+). It functions in the pathway amino-acid biosynthesis; L-proline biosynthesis; L-glutamate 5-semialdehyde from L-glutamate: step 2/2. Its function is as follows. Catalyzes the NADPH-dependent reduction of L-glutamate 5-phosphate into L-glutamate 5-semialdehyde and phosphate. The product spontaneously undergoes cyclization to form 1-pyrroline-5-carboxylate. This is Gamma-glutamyl phosphate reductase from Alkaliphilus oremlandii (strain OhILAs) (Clostridium oremlandii (strain OhILAs)).